The following is a 550-amino-acid chain: 2-succinyl-5-enolpyruvyl-6-hydroxy-3-cyclohexene-1-carboxylate synthase (550 aa).

Belongs to the TPP enzyme family. MenD subfamily. In terms of assembly, homodimer. It depends on Mg(2+) as a cofactor. The cofactor is Mn(2+). Thiamine diphosphate serves as cofactor.

The catalysed reaction is isochorismate + 2-oxoglutarate + H(+) = 5-enolpyruvoyl-6-hydroxy-2-succinyl-cyclohex-3-ene-1-carboxylate + CO2. It functions in the pathway quinol/quinone metabolism; 1,4-dihydroxy-2-naphthoate biosynthesis; 1,4-dihydroxy-2-naphthoate from chorismate: step 2/7. The protein operates within quinol/quinone metabolism; menaquinone biosynthesis. Functionally, catalyzes the thiamine diphosphate-dependent decarboxylation of 2-oxoglutarate and the subsequent addition of the resulting succinic semialdehyde-thiamine pyrophosphate anion to isochorismate to yield 2-succinyl-5-enolpyruvyl-6-hydroxy-3-cyclohexene-1-carboxylate (SEPHCHC). This is 2-succinyl-5-enolpyruvyl-6-hydroxy-3-cyclohexene-1-carboxylate synthase from Desulfitobacterium hafniense (strain DSM 10664 / DCB-2).